The following is a 202-amino-acid chain: Small ribosomal subunit protein uS4 (202 aa).

One can recognise an S4 RNA-binding domain in the interval 91–157; that stretch reads CRLDNVVYRA…TPFIVARETH (67 aa).

It belongs to the universal ribosomal protein uS4 family. As to quaternary structure, part of the 30S ribosomal subunit. Contacts protein S5. The interaction surface between S4 and S5 is involved in control of translational fidelity.

In terms of biological role, one of the primary rRNA binding proteins, it binds directly to 16S rRNA where it nucleates assembly of the body of the 30S subunit. Its function is as follows. With S5 and S12 plays an important role in translational accuracy. In Nocardioides sp. (strain ATCC BAA-499 / JS614), this protein is Small ribosomal subunit protein uS4.